Consider the following 499-residue polypeptide: Maturase K (499 aa).

It belongs to the intron maturase 2 family. MatK subfamily.

The protein localises to the plastid. It localises to the chloroplast. Usually encoded in the trnK tRNA gene intron. Probably assists in splicing its own and other chloroplast group II introns. The polypeptide is Maturase K (Gymnocladus chinensis (Soap tree)).